Reading from the N-terminus, the 48-residue chain is ATP synthase protein 8 (48 aa).

The chain crosses the membrane as a helical span at residues Leu4–Ile24.

This sequence belongs to the ATPase protein 8 family. As to quaternary structure, F-type ATPases have 2 components, CF(1) - the catalytic core - and CF(0) - the membrane proton channel.

The protein localises to the mitochondrion membrane. Functionally, mitochondrial membrane ATP synthase (F(1)F(0) ATP synthase or Complex V) produces ATP from ADP in the presence of a proton gradient across the membrane which is generated by electron transport complexes of the respiratory chain. F-type ATPases consist of two structural domains, F(1) - containing the extramembraneous catalytic core and F(0) - containing the membrane proton channel, linked together by a central stalk and a peripheral stalk. During catalysis, ATP synthesis in the catalytic domain of F(1) is coupled via a rotary mechanism of the central stalk subunits to proton translocation. Part of the complex F(0) domain. Minor subunit located with subunit a in the membrane. This is ATP synthase protein 8 (atp8) from Aspergillus amstelodami.